Here is a 1109-residue protein sequence, read N- to C-terminus: Protein argonaute 3 (1109 aa).

Over residues methionine 1–tyrosine 13 the composition is skewed to basic and acidic residues. 2 disordered regions span residues methionine 1–arginine 83 and aspartate 125–lysine 220. Gly residues-rich tracts occupy residues aspartate 14 to asparagine 30, arginine 37 to glycine 54, and aspartate 62 to arginine 83. The span at aspartate 125 to serine 134 shows a compositional bias: basic and acidic residues. Basic residues predominate over residues glutamine 135–serine 161. Residues serine 411–glutamate 521 enclose the PAZ domain. Basic and acidic residues predominate over residues valine 527–serine 545. Residues valine 527–threonine 548 are disordered. A Piwi domain is found at leucine 720 to glutamate 1023.

This sequence belongs to the argonaute family. Ago subfamily.

Probably involved in the RNA silencing pathway. May bind to short RNAs such as microRNAs (miRNAs) or short interfering RNAs (siRNAs), and represses the translation of mRNAs which are complementary to them. This is Protein argonaute 3 (AGO3) from Oryza sativa subsp. japonica (Rice).